A 518-amino-acid chain; its full sequence is MALMRCLLPPGFYRTLYHPWTRCASSGTLQIKDPLNFWCGARVDLKDVKTKSEPVFEPATGRVLCRLQTCGSAEVDAAVRNASAAFKVWRKLSGMERARVMLEAARLIEKRREEIAEMEVINNGKSITEARLDVDSARLSIEYFAGQATTLSGQHVQLPGGSFAYTRREPFGVCVGIGAWNYPFQIAAWKSAPAIACGNSMVFKPSPLTPVTAVLLAEIYRQAGAPEGLFNVVQGGQETGSLLCLHPSVEKVSFTGSVPTGKKIMEMASRGVKAVTLELGGKSPLIIFEDTDLENAVRGALMANFLSQGQVCSNGTRVFVQSSIVPQFLKEVVRRTKAISIGDPLLDETRMGALVSKAHLDKVLRYVEQAKNEGAQVLCGGEPFSPADPKLKDGYYMTPCVLDSCTDDMTCVKEEIFGPVMSVLTFDTEDEVLRRANDSDLGLAAGVFTKDVKRAHRVIENLQAGSCFINNYNITPVEVPFGGFKASGIGRENGQVTIEFYSQLKTVVVEMGDVDSLF.

NAD(+) is bound by residues K204 and 256–260 (GSVPT). E278 functions as the Proton acceptor in the catalytic mechanism. C312 (nucleophile) is an active-site residue. E415 lines the NAD(+) pocket.

It belongs to the aldehyde dehydrogenase family. Homotetramer.

The protein resides in the cytoplasm. It localises to the cytosol. It carries out the reaction 4-(trimethylamino)butanal + NAD(+) + H2O = 4-(trimethylamino)butanoate + NADH + 2 H(+). It catalyses the reaction an aldehyde + NAD(+) + H2O = a carboxylate + NADH + 2 H(+). It functions in the pathway amine and polyamine biosynthesis; carnitine biosynthesis. In terms of biological role, converts gamma-trimethylaminobutyraldehyde into gamma-butyrobetaine with high efficiency (in vitro). Can catalyze the irreversible oxidation of a broad range of aldehydes to the corresponding acids in an NAD-dependent reaction, but with low efficiency. This chain is 4-trimethylaminobutyraldehyde dehydrogenase B (aldh9a1b), found in Danio rerio (Zebrafish).